We begin with the raw amino-acid sequence, 321 residues long: D-alanine--D-alanine ligase (321 aa).

The ATP-grasp domain maps to 121–315 (RSWFLTNNIN…FTNLIEEIIK (195 aa)). 147 to 199 (PVKRPYVIKPLTQGSSIGVEVIFEEDDFNFADYNFPYGYQVIIEQYIKGRELQ) serves as a coordination point for ATP. Glutamate 268, glutamate 282, and asparagine 284 together coordinate Mg(2+).

The protein belongs to the D-alanine--D-alanine ligase family. The cofactor is Mg(2+). It depends on Mn(2+) as a cofactor.

The protein localises to the cytoplasm. The enzyme catalyses 2 D-alanine + ATP = D-alanyl-D-alanine + ADP + phosphate + H(+). The protein operates within cell wall biogenesis; peptidoglycan biosynthesis. Functionally, cell wall formation. The protein is D-alanine--D-alanine ligase of Rickettsia felis (strain ATCC VR-1525 / URRWXCal2) (Rickettsia azadi).